The sequence spans 338 residues: UDP-3-O-acylglucosamine N-acyltransferase (338 aa).

Histidine 251 serves as the catalytic Proton acceptor.

This sequence belongs to the transferase hexapeptide repeat family. LpxD subfamily. As to quaternary structure, homotrimer.

It catalyses the reaction a UDP-3-O-[(3R)-3-hydroxyacyl]-alpha-D-glucosamine + a (3R)-hydroxyacyl-[ACP] = a UDP-2-N,3-O-bis[(3R)-3-hydroxyacyl]-alpha-D-glucosamine + holo-[ACP] + H(+). The protein operates within bacterial outer membrane biogenesis; LPS lipid A biosynthesis. Its function is as follows. Catalyzes the N-acylation of UDP-3-O-acylglucosamine using 3-hydroxyacyl-ACP as the acyl donor. Is involved in the biosynthesis of lipid A, a phosphorylated glycolipid that anchors the lipopolysaccharide to the outer membrane of the cell. The polypeptide is UDP-3-O-acylglucosamine N-acyltransferase (Psychrobacter arcticus (strain DSM 17307 / VKM B-2377 / 273-4)).